The chain runs to 331 residues: tRNA(Ile)-lysidine synthase (331 aa).

29–34 (SGGPDS) contributes to the ATP binding site.

Belongs to the tRNA(Ile)-lysidine synthase family.

Its subcellular location is the cytoplasm. The enzyme catalyses cytidine(34) in tRNA(Ile2) + L-lysine + ATP = lysidine(34) in tRNA(Ile2) + AMP + diphosphate + H(+). Ligates lysine onto the cytidine present at position 34 of the AUA codon-specific tRNA(Ile) that contains the anticodon CAU, in an ATP-dependent manner. Cytidine is converted to lysidine, thus changing the amino acid specificity of the tRNA from methionine to isoleucine. This Chlorobaculum tepidum (strain ATCC 49652 / DSM 12025 / NBRC 103806 / TLS) (Chlorobium tepidum) protein is tRNA(Ile)-lysidine synthase.